A 623-amino-acid chain; its full sequence is Arginine decarboxylase 2 (623 aa).

Lysine 109 carries the post-translational modification N6-(pyridoxal phosphate)lysine. Position 295-305 (295-305 (LDCGGGLGVDY)) interacts with substrate.

It belongs to the Orn/Lys/Arg decarboxylase class-II family. SpeA subfamily. The cofactor is pyridoxal 5'-phosphate. Mg(2+) serves as cofactor. In terms of tissue distribution, expressed in stems (at protein level).

The catalysed reaction is L-arginine + H(+) = agmatine + CO2. Its pathway is amine and polyamine biosynthesis; agmatine biosynthesis; agmatine from L-arginine: step 1/1. The polypeptide is Arginine decarboxylase 2 (ADC2) (Oryza sativa subsp. japonica (Rice)).